A 161-amino-acid chain; its full sequence is MPADLHPDLDALAPLLGTWAGQGAGEYPTIEPFEYLEEVVFSHVGKPFLVYAQKTRAVADGTPLHAETGYLRVPKPGQVELVLAHPSGITEIEVGTYSASGGVIEMEMVTTAIGMTPTAKEVTALSRSFRMVGDELSYRLRMGAVGLPLQHHLGARLRRKS.

A GXWXGXG motif is present at residues Gly17–Gly23. His152 is a binding site for heme b.

The protein belongs to the nitrobindin family. Homodimer. Heme b is required as a cofactor.

The enzyme catalyses peroxynitrite = nitrate. Its pathway is nitrogen metabolism. Its function is as follows. Heme-binding protein able to scavenge peroxynitrite and to protect free L-tyrosine against peroxynitrite-mediated nitration, by acting as a peroxynitrite isomerase that converts peroxynitrite to nitrate. Therefore, this protein likely plays a role in peroxynitrite sensing and in the detoxification of reactive nitrogen and oxygen species (RNS and ROS, respectively). Is able to bind nitric oxide (NO) in vitro, but may act as a sensor of peroxynitrite levels in vivo. This Mycobacterium ulcerans (strain Agy99) protein is Peroxynitrite isomerase 2.